A 198-amino-acid polypeptide reads, in one-letter code: FMN-dependent NADH:quinone oxidoreductase (198 aa).

Position 96–99 (96–99) interacts with FMN; sequence MYNF.

This sequence belongs to the azoreductase type 1 family. As to quaternary structure, homodimer. It depends on FMN as a cofactor.

The enzyme catalyses 2 a quinone + NADH + H(+) = 2 a 1,4-benzosemiquinone + NAD(+). It carries out the reaction N,N-dimethyl-1,4-phenylenediamine + anthranilate + 2 NAD(+) = 2-(4-dimethylaminophenyl)diazenylbenzoate + 2 NADH + 2 H(+). Its function is as follows. Quinone reductase that provides resistance to thiol-specific stress caused by electrophilic quinones. In terms of biological role, also exhibits azoreductase activity. Catalyzes the reductive cleavage of the azo bond in aromatic azo compounds to the corresponding amines. This chain is FMN-dependent NADH:quinone oxidoreductase, found in Burkholderia thailandensis (strain ATCC 700388 / DSM 13276 / CCUG 48851 / CIP 106301 / E264).